The sequence spans 175 residues: Respiratory supercomplex factor 1-B, mitochondrial (175 aa).

The HIG1 domain occupies 3–94; it reads DQADVLADPD…TERKQRREFE (92 aa). Transmembrane regions (helical) follow at residues 30 to 46 and 66 to 83; these read PLIP…LYRA and IYAQ…GMYY. A coiled-coil region spans residues 83 to 115; the sequence is YKTERKQRREFEKKVEERKAQEKRDAWLRELEA.

It belongs to the RCF1 family. In terms of assembly, associates with the respiratory chain complex III/complex IV supercomplex.

The protein resides in the mitochondrion membrane. Cytochrome c oxidase subunit which plays a role in assembly of respiratory supercomplexes. This Talaromyces marneffei (strain ATCC 18224 / CBS 334.59 / QM 7333) (Penicillium marneffei) protein is Respiratory supercomplex factor 1-B, mitochondrial (rcf1-B).